We begin with the raw amino-acid sequence, 1038 residues long: Zinc finger protein 628 (1038 aa).

Residues methionine 1–alanine 31 are disordered. Positions threonine 13–glycine 22 are enriched in low complexity. C2H2-type zinc fingers lie at residues tyrosine 34–histidine 56, tyrosine 62–histidine 84, tyrosine 90–histidine 112, phenylalanine 118–histidine 140, tyrosine 146–histidine 168, and tyrosine 174–histidine 196. Threonine 197 carries the phosphothreonine modification. The C2H2-type 7 zinc finger occupies phenylalanine 202 to histidine 224. Disordered regions lie at residues histidine 220–arginine 242 and leucine 254–valine 273. Pro residues-rich tracts occupy residues alanine 227–proline 237 and arginine 257–valine 273. C2H2-type zinc fingers lie at residues phenylalanine 346 to histidine 368, phenylalanine 376 to histidine 398, tyrosine 446 to histidine 468, tyrosine 474 to histidine 496, phenylalanine 502 to histidine 524, tyrosine 530 to histidine 552, and histidine 558 to histidine 580. Threonine 581 bears the Phosphothreonine mark. 2 consecutive C2H2-type zinc fingers follow at residues phenylalanine 586 to histidine 608 and phenylalanine 614 to histidine 636. Disordered stretches follow at residues threonine 637 to alanine 661 and proline 717 to glycine 763. The span at proline 723–lysine 733 shows a compositional bias: pro residues. The span at valine 734–serine 756 shows a compositional bias: low complexity. 4 repeat units span residues valine 811 to threonine 821, valine 822 to threonine 832, valine 833 to threonine 843, and valine 844 to serine 854. The interval valine 811 to serine 854 is 4 X 11 AA tandem repeats of VQLQP-[AL]-[QT]-[EG]-[VQ]-[ATV]-[ST]. An interaction with TAF4B region spans residues aspartate 922–phenylalanine 1038.

Interacts with TAF4B. In terms of tissue distribution, expressed widely in testis, in both germline and somatic cells. Seems to have particularly strong expression in meiotic spermatocytes, postmeiotic round spermatids and Sertoli cells. Not detected in elongating spermatids or mature sperm (at protein level). Expressed in testis, ovary, spleen, lung, brain, liver and kidney. Expressed in D3 embryonic stem cells and F9 embryonal carcinoma cells.

The protein resides in the nucleus. Its function is as follows. Transcriptional activator. Binds DNA on GT-box consensus sequence 5'-TTGGTT-3'. Plays a role in spermiogenesis. The chain is Zinc finger protein 628 from Mus musculus (Mouse).